The following is a 192-amino-acid chain: Thymidine kinase (192 aa).

Residues 9 to 16 (SAMNAGKS) and 87 to 90 (DECQ) contribute to the ATP site. Glu-88 serves as the catalytic Proton acceptor. Zn(2+) contacts are provided by Cys-145, Cys-147, Cys-182, and His-185.

It belongs to the thymidine kinase family. In terms of assembly, homotetramer.

It is found in the cytoplasm. It catalyses the reaction thymidine + ATP = dTMP + ADP + H(+). The sequence is that of Thymidine kinase from Shewanella oneidensis (strain ATCC 700550 / JCM 31522 / CIP 106686 / LMG 19005 / NCIMB 14063 / MR-1).